The following is a 312-amino-acid chain: Pimeloyl-[acyl-carrier protein] methyl ester esterase (312 aa).

Residues 17–241 (VYLIHGWGAN…KAAHAPFLSH (225 aa)) enclose the AB hydrolase-1 domain. Residues tryptophan 23, 83–84 (SL), and 145–149 (FLQLQ) each bind substrate. The Nucleophile role is filled by serine 83. Residues aspartate 207 and histidine 235 contribute to the active site. Histidine 235 lines the substrate pocket.

It belongs to the AB hydrolase superfamily. Carboxylesterase BioH family. Monomer.

Its subcellular location is the cytoplasm. It catalyses the reaction 6-carboxyhexanoyl-[ACP] methyl ester + H2O = 6-carboxyhexanoyl-[ACP] + methanol + H(+). Its pathway is cofactor biosynthesis; biotin biosynthesis. The physiological role of BioH is to remove the methyl group introduced by BioC when the pimeloyl moiety is complete. It allows to synthesize pimeloyl-ACP via the fatty acid synthetic pathway through the hydrolysis of the ester bonds of pimeloyl-ACP esters. In Neisseria meningitidis serogroup A / serotype 4A (strain DSM 15465 / Z2491), this protein is Pimeloyl-[acyl-carrier protein] methyl ester esterase.